The following is a 397-amino-acid chain: L-rhamnonate dehydratase (397 aa).

Substrate contacts are provided by H25 and R51. 3 residues coordinate Mg(2+): D217, E243, and E271. H321 functions as the Proton acceptor in the catalytic mechanism. Substrate is bound at residue E341.

The protein belongs to the mandelate racemase/muconate lactonizing enzyme family. RhamD subfamily. In terms of assembly, homooctamer; tetramer of dimers. It depends on Mg(2+) as a cofactor.

The catalysed reaction is L-rhamnonate = 2-dehydro-3-deoxy-L-rhamnonate + H2O. Its pathway is carbohydrate degradation; L-rhamnose degradation. Its function is as follows. Catalyzes the dehydration of L-rhamnonate to 2-keto-3-deoxy-L-rhamnonate (KDR). Also shows activity with L-lyxonate and L-mannonate, with much lower catalytic efficiency. Catalyzes the third step in an alternative pathway for rhamnose utilization that does not involve phosphorylated intermediates. The protein is L-rhamnonate dehydratase of Sphingomonas sp. (strain SKA58).